The following is a 611-amino-acid chain: Elongation factor 4 (611 aa).

The region spanning 11–193 (KHIRNFSIVA…KIVKDVPAPT (183 aa)) is the tr-type G domain. GTP is bound by residues 23-28 (DHGKST) and 140-143 (NKID).

Belongs to the TRAFAC class translation factor GTPase superfamily. Classic translation factor GTPase family. LepA subfamily.

The protein resides in the cell membrane. The enzyme catalyses GTP + H2O = GDP + phosphate + H(+). Its function is as follows. Required for accurate and efficient protein synthesis under certain stress conditions. May act as a fidelity factor of the translation reaction, by catalyzing a one-codon backward translocation of tRNAs on improperly translocated ribosomes. Back-translocation proceeds from a post-translocation (POST) complex to a pre-translocation (PRE) complex, thus giving elongation factor G a second chance to translocate the tRNAs correctly. Binds to ribosomes in a GTP-dependent manner. This chain is Elongation factor 4, found in Limosilactobacillus reuteri (strain DSM 20016) (Lactobacillus reuteri).